A 473-amino-acid polypeptide reads, in one-letter code: MKTLYSLRRFYPVETLFNGTLALAGRDQETTGFAWWAGNARLINLSGKLLGAHVAHAGLIVFWAGAMNLFEVAHFVPEKPMYEQGLILLPHLATLGWGVGPGGEVVDTFPYFVSGVLHLISSAVLGFGGIYHALIGPETLEESLPFFGYVWKDRSKMTTILGIHLILLGVGAFLLVLKALYFGGVYDTWAPGGGDVRKITNLTLSPSVIFGYLLESPFGGEGWIVSVDNLEDIIGGHVWLGSICIFGGIWHILTKPFAWARRAFVWSGEAYLSYSLGALSVFGFIACCFVWFNNTAYPSEFYGPTGPEASQAQAFTFLVRDQRLGANVGSAQGPTGLGKYLMRSPTGEIIFGGETMRFWDLRAPWLEPLRGPNGLDLSRLKKDIQPWQERRSAEYMTHAPLGSLNSVGGVATEINAVNYVSPRSWLATSHFVLGFFFFVGHLWHAGRARAAAAGFEKGIDRDFEPVLSMNPLN.

Positions 1–14 are excised as a propeptide; it reads MKTLYSLRRFYPVE. The residue at position 15 (Thr15) is an N-acetylthreonine. Position 15 is a phosphothreonine (Thr15). A run of 5 helical transmembrane segments spans residues 69 to 93, 134 to 155, 178 to 200, 255 to 275, and 291 to 312; these read LFEVAHFVPEKPMYEQGLILLPHLA, LIGPETLEESLPFFGYVWKDRS, KALYFGGVYDTWAPGGGDVRKIT, KPFAWARRAFVWSGEAYLSYS, and WFNNTAYPSEFYGPTGPEASQA. Residue Glu367 participates in [CaMn4O5] cluster binding. A helical membrane pass occupies residues 447-471; the sequence is RARAAAAGFEKGIDRDFEPVLSMNP.

It belongs to the PsbB/PsbC family. PsbC subfamily. As to quaternary structure, PSII is composed of 1 copy each of membrane proteins PsbA, PsbB, PsbC, PsbD, PsbE, PsbF, PsbH, PsbI, PsbJ, PsbK, PsbL, PsbM, PsbT, PsbX, PsbY, PsbZ, Psb30/Ycf12, at least 3 peripheral proteins of the oxygen-evolving complex and a large number of cofactors. It forms dimeric complexes. It depends on Binds multiple chlorophylls and provides some of the ligands for the Ca-4Mn-5O cluster of the oxygen-evolving complex. It may also provide a ligand for a Cl- that is required for oxygen evolution. PSII binds additional chlorophylls, carotenoids and specific lipids. as a cofactor.

The protein localises to the plastid. The protein resides in the chloroplast thylakoid membrane. One of the components of the core complex of photosystem II (PSII). It binds chlorophyll and helps catalyze the primary light-induced photochemical processes of PSII. PSII is a light-driven water:plastoquinone oxidoreductase, using light energy to abstract electrons from H(2)O, generating O(2) and a proton gradient subsequently used for ATP formation. The sequence is that of Photosystem II CP43 reaction center protein from Cycas taitungensis (Prince sago).